The chain runs to 566 residues: Glutamate--tRNA ligase (566 aa).

A 'HIGH' region motif is present at residues 105–115 (PNPDGPIHLGN).

Belongs to the class-I aminoacyl-tRNA synthetase family. Glutamate--tRNA ligase type 2 subfamily.

It localises to the cytoplasm. It catalyses the reaction tRNA(Glu) + L-glutamate + ATP = L-glutamyl-tRNA(Glu) + AMP + diphosphate. Catalyzes the attachment of glutamate to tRNA(Glu) in a two-step reaction: glutamate is first activated by ATP to form Glu-AMP and then transferred to the acceptor end of tRNA(Glu). This chain is Glutamate--tRNA ligase, found in Sulfurisphaera tokodaii (strain DSM 16993 / JCM 10545 / NBRC 100140 / 7) (Sulfolobus tokodaii).